Consider the following 211-residue polypeptide: Dual specificity protein phosphatase 26 (211 aa).

One can recognise a Tyrosine-protein phosphatase domain in the interval 60–207 (NHADEVWPGL…LLALDRRLRQ (148 aa)). C152 (phosphocysteine intermediate) is an active-site residue.

This sequence belongs to the protein-tyrosine phosphatase family. Non-receptor class dual specificity subfamily. As to quaternary structure, interacts with HSF4.

The protein resides in the cytoplasm. It localises to the nucleus. Its subcellular location is the golgi apparatus. The catalysed reaction is O-phospho-L-tyrosyl-[protein] + H2O = L-tyrosyl-[protein] + phosphate. The enzyme catalyses O-phospho-L-seryl-[protein] + H2O = L-seryl-[protein] + phosphate. It carries out the reaction O-phospho-L-threonyl-[protein] + H2O = L-threonyl-[protein] + phosphate. Inactivates MAPK1 and MAPK3 which leads to dephosphorylation of heat shock factor protein 4 and a reduction in its DNA-binding activity. This chain is Dual specificity protein phosphatase 26 (Dusp26), found in Rattus norvegicus (Rat).